Reading from the N-terminus, the 346-residue chain is tRNA(Ile)-lysidine synthase (346 aa).

Position 32 to 37 (32 to 37 (SGGPDS)) interacts with ATP.

Belongs to the tRNA(Ile)-lysidine synthase family.

The protein localises to the cytoplasm. The catalysed reaction is cytidine(34) in tRNA(Ile2) + L-lysine + ATP = lysidine(34) in tRNA(Ile2) + AMP + diphosphate + H(+). Ligates lysine onto the cytidine present at position 34 of the AUA codon-specific tRNA(Ile) that contains the anticodon CAU, in an ATP-dependent manner. Cytidine is converted to lysidine, thus changing the amino acid specificity of the tRNA from methionine to isoleucine. In Rhodopseudomonas palustris (strain ATCC BAA-98 / CGA009), this protein is tRNA(Ile)-lysidine synthase.